The sequence spans 346 residues: MIELKNVSKVFTTKKVNVEALKSTSLQVKKGEVFGIIGYSGAGKSTLIRCVNLLEKPTTGNIIVNNQDLTTLSAKELAKARQKIGMIFQGFNLLKTVTVYENIALPLRLAGIPKTEIEKRVEKYLRIVDLFNRKDAYPSELSGGQKQRVAIARALSHEPEVLLSDEATSALDPETTDSILDLLLKINEEIGITILLITHEMNVIQRICDRVAVMEHGAVIESGTVKEIFTNPQHVTTKKFVNSAFAAKIPAEVQKELQRTGEIVTLSFIGNSSGEPALAIATKRFQVYPNILSGNITQLKHEAYGKLVIHMQGEQNEINHALSFLQEQGIIVEGGRTDYGKQVLFG.

The region spanning 2-241 (IELKNVSKVF…PQHVTTKKFV (240 aa)) is the ABC transporter domain. ATP is bound at residue 38 to 45 (GYSGAGKS).

The protein belongs to the ABC transporter superfamily. Methionine importer (TC 3.A.1.24) family. In terms of assembly, the complex is composed of two ATP-binding proteins (MetN), two transmembrane proteins (MetI) and a solute-binding protein (MetQ).

It localises to the cell membrane. The catalysed reaction is L-methionine(out) + ATP + H2O = L-methionine(in) + ADP + phosphate + H(+). It catalyses the reaction D-methionine(out) + ATP + H2O = D-methionine(in) + ADP + phosphate + H(+). Functionally, part of the ABC transporter complex MetNIQ involved in methionine import. Responsible for energy coupling to the transport system. The chain is Methionine import ATP-binding protein MetN 1 from Bacillus cereus (strain ATCC 14579 / DSM 31 / CCUG 7414 / JCM 2152 / NBRC 15305 / NCIMB 9373 / NCTC 2599 / NRRL B-3711).